The sequence spans 314 residues: MIEFEKPNIHKIDENDNYGKFVVEPLERGYGTTLGNSLRRILLSSLPGAAVTSIQIDGVLHEFSTIEGVTEDVTAIILNVKKIALKLESDETKTLEIDVKGPANVTAGDIIGDADVEVLNPDLPICTVADGAHFHMRMTANTGRGYVSAEDNKHREDDMPIGVLAVDSLYSPIERVNYQVENTRVGQRDDFDKLTLDVWTNGSITPSEAISLSAKILTDHLSIFVNLTDEAKNTDVMVEKEETHKEKMLEMTIEELDLSVRSYNCLKRAGINTVQELTNKTEADMMKVRNLGRKSLEEVKAKLADLGLSLRKED.

The alpha N-terminal domain (alpha-NTD) stretch occupies residues 1–228; the sequence is MIEFEKPNIH…DHLSIFVNLT (228 aa). The alpha C-terminal domain (alpha-CTD) stretch occupies residues 245-314; sequence KEKMLEMTIE…DLGLSLRKED (70 aa).

This sequence belongs to the RNA polymerase alpha chain family. Homodimer. The RNAP catalytic core consists of 2 alpha, 1 beta, 1 beta' and 1 omega subunit. When a sigma factor is associated with the core the holoenzyme is formed, which can initiate transcription.

The enzyme catalyses RNA(n) + a ribonucleoside 5'-triphosphate = RNA(n+1) + diphosphate. DNA-dependent RNA polymerase catalyzes the transcription of DNA into RNA using the four ribonucleoside triphosphates as substrates. This Lactiplantibacillus plantarum (strain ATCC BAA-793 / NCIMB 8826 / WCFS1) (Lactobacillus plantarum) protein is DNA-directed RNA polymerase subunit alpha.